A 159-amino-acid chain; its full sequence is Nudix hydrolase DR_1025 (159 aa).

Mg(2+) is bound by residues Met-1, Arg-14, and Ser-49. 1–6 lines the ATP pocket; the sequence is MEHDER. In terms of domain architecture, Nudix hydrolase spans 11-144; that stretch reads VELRAAGVVL…QIRMYQTKLF (134 aa). 50–51 is a binding site for ATP; sequence GA. The Nudix box signature appears at 50–71; sequence GAVEDGENPQDAAVREACEETG. 2 residues coordinate Mg(2+): Glu-53 and Glu-65. ATP is bound at residue 87-89; that stretch reads FPD. Arg-95 serves as a coordination point for Mg(2+).

Belongs to the Nudix hydrolase family. Homodimer. Mg(2+) is required as a cofactor.

The enzyme catalyses 8-oxo-dGTP + H2O = 8-oxo-dGDP + phosphate + H(+). It catalyses the reaction 8-oxo-GTP + H2O = 8-oxo-GDP + phosphate + H(+). It carries out the reaction P(1),P(4)-bis(5'-adenosyl) tetraphosphate + H2O = AMP + ATP + 2 H(+). Its function is as follows. Hydrolase that can act as a nucleoside triphosphatase and a dinucleoside polyphosphate pyrophosphatase. The best substrates are 8-oxo-dGTP and 8-oxo-GTP. Other substrates include Ap4A, dGTP and GTP. May be involved in protection from damage caused by radiation. In Deinococcus radiodurans (strain ATCC 13939 / DSM 20539 / JCM 16871 / CCUG 27074 / LMG 4051 / NBRC 15346 / NCIMB 9279 / VKM B-1422 / R1), this protein is Nudix hydrolase DR_1025.